The sequence spans 102 residues: UPF0213 protein XCC3072 (102 aa).

A GIY-YIG domain is found at 5–80; that stretch reads KPWHLYLLLC…KQQPRARKLA (76 aa).

This sequence belongs to the UPF0213 family.

This chain is UPF0213 protein XCC3072, found in Xanthomonas campestris pv. campestris (strain ATCC 33913 / DSM 3586 / NCPPB 528 / LMG 568 / P 25).